We begin with the raw amino-acid sequence, 348 residues long: Eukaryotic translation initiation factor 3 subunit F (348 aa).

An MPN domain is found at 30-166 (VVIQPQAIFS…TRTYISAPVG (137 aa)). Gly residues predominate over residues 312-327 (STAIGGTGAESGGQRG). Residues 312–348 (STAIGGTGAESGGQRGGQRNNRQRGGQQRNQAEELRA) are disordered. Over residues 328 to 341 (GQRNNRQRGGQQRN) the composition is skewed to low complexity.

This sequence belongs to the eIF-3 subunit F family. As to quaternary structure, component of the eukaryotic translation initiation factor 3 (eIF-3) complex.

The protein resides in the cytoplasm. Component of the eukaryotic translation initiation factor 3 (eIF-3) complex, which is involved in protein synthesis of a specialized repertoire of mRNAs and, together with other initiation factors, stimulates binding of mRNA and methionyl-tRNAi to the 40S ribosome. The eIF-3 complex specifically targets and initiates translation of a subset of mRNAs involved in cell proliferation. The sequence is that of Eukaryotic translation initiation factor 3 subunit F from Coccidioides immitis (strain RS) (Valley fever fungus).